A 139-amino-acid polypeptide reads, in one-letter code: Ribulose bisphosphate carboxylase small subunit (139 aa).

The protein belongs to the RuBisCO small chain family. Heterohexadecamer of 8 large and 8 small subunits.

It localises to the plastid. The protein localises to the chloroplast. Functionally, ruBisCO catalyzes two reactions: the carboxylation of D-ribulose 1,5-bisphosphate, the primary event in carbon dioxide fixation, as well as the oxidative fragmentation of the pentose substrate in the photorespiration process. Both reactions occur simultaneously and in competition at the same active site. Although the small subunit is not catalytic it is essential for maximal activity. This is Ribulose bisphosphate carboxylase small subunit from Trieres chinensis (Marine centric diatom).